The following is a 338-amino-acid chain: Arginase, mitochondrial (338 aa).

Residues 1 to 15 (MSTIARRGFHYMQRL) constitute a mitochondrion transit peptide. Residues S73 and 92 to 95 (DSTN) contribute to the L-ornithine site. Residues H157, D181, H183, and D185 each contribute to the Mn(2+) site. Residue 185 to 187 (DLY) participates in L-ornithine binding. Residue 191-193 (EGN) coordinates substrate. An L-ornithine-binding site is contributed by S220. 2 residues coordinate Mn(2+): D266 and D268. E309 contacts substrate.

It belongs to the arginase family. In terms of assembly, forms homohexamers. The cofactor is Mn(2+).

The protein resides in the mitochondrion. The catalysed reaction is L-arginine + H2O = urea + L-ornithine. It carries out the reaction agmatine + H2O = urea + putrescine. The protein operates within nitrogen metabolism; urea cycle; L-ornithine and urea from L-arginine: step 1/1. It participates in amine and polyamine biosynthesis; putrescine biosynthesis via agmatine pathway; putrescine from agmatine: step 1/1. Functionally, catalyzes the hydrolysis of L-arginine to urea and L-ornithine. The latter can be utilized in the urea cycle or as a precursor for the synthesis of both polyamines and proline. Possesses agmatinase activity. Catalyzes the formation of putrescine from agmatine. This chain is Arginase, mitochondrial, found in Medicago truncatula (Barrel medic).